The following is a 572-amino-acid chain: Protein IQ-DOMAIN 30 (572 aa).

A disordered region spans residues 75 to 96 (SDDEIQVSEVQPTDSQDVASVP). Residues 82-92 (SEVQPTDSQDV) are compositionally biased toward polar residues. 2 consecutive IQ domains span residues 108–136 (QEIAAVTVQAAYRGYLARRAFKILKGIIR) and 137–154 (LQALIRGHMVRRQAVSTL). Positions 159-178 (GIVRLQALARGREIRHSDIG) are calmodulin-binding. 2 disordered regions span residues 282–332 (RPKK…MDNP) and 399–572 (IQTH…EWKR). Polar residues-rich tracts occupy residues 291 to 305 (PSSNLDNSSVAQTSS) and 400 to 419 (QTHTPLGTNESLDSTLVNQI). Residues 428 to 455 (AEEKEDVKEERTPKQNHKENSAGKENQK) are compositionally biased toward basic and acidic residues. Composition is skewed to polar residues over residues 459–493 (KASSVTATQTAEFQESGNGNQTSSPGIPSYMQATK), 502–514 (QGSSSPRQLGTTE), and 522–560 (LPSSGNSAKITSHSPKTRVSNSSGKSGNKTEKTLLSSRE).

This sequence belongs to the IQD family. In terms of assembly, binds to multiple calmodulin (CaM) in the presence of Ca(2+) and CaM-like proteins.

Its subcellular location is the nucleus envelope. It localises to the cytoplasm. The protein resides in the cytoskeleton. In terms of biological role, may be involved in cooperative interactions with calmodulins or calmodulin-like proteins. Recruits calmodulin proteins to microtubules, thus being a potential scaffold in cellular signaling and trafficking. May associate with nucleic acids and regulate gene expression at the transcriptional or post-transcriptional level. In Arabidopsis thaliana (Mouse-ear cress), this protein is Protein IQ-DOMAIN 30.